The following is a 76-amino-acid chain: Exodeoxyribonuclease 7 small subunit (76 aa).

It belongs to the XseB family. As to quaternary structure, heterooligomer composed of large and small subunits.

The protein localises to the cytoplasm. The catalysed reaction is Exonucleolytic cleavage in either 5'- to 3'- or 3'- to 5'-direction to yield nucleoside 5'-phosphates.. Functionally, bidirectionally degrades single-stranded DNA into large acid-insoluble oligonucleotides, which are then degraded further into small acid-soluble oligonucleotides. This Latilactobacillus sakei subsp. sakei (strain 23K) (Lactobacillus sakei subsp. sakei) protein is Exodeoxyribonuclease 7 small subunit.